Reading from the N-terminus, the 237-residue chain is UPF0053 protein HI_0056 (237 aa).

7 helical membrane-spanning segments follow: residues 12-32, 49-69, 90-110, 126-146, 151-171, 188-208, and 210-230; these read ISLV…IIFI, ILGL…LAWI, ILLI…KEAI, YLGV…DSVI, MASH…VMMF, ILAL…SLDI, and IPKG…MINI.

This sequence belongs to the UPF0053 family.

The protein resides in the cell membrane. The protein is UPF0053 protein HI_0056 of Haemophilus influenzae (strain ATCC 51907 / DSM 11121 / KW20 / Rd).